The sequence spans 391 residues: Trehalose-phosphate phosphatase (391 aa).

Residue Asp-147 is the Nucleophile of the active site. Asp-147, Asp-149, and Asp-330 together coordinate Mg(2+). Asp-147–Asp-149 contributes to the substrate binding site.

This sequence belongs to the trehalose phosphatase family. It depends on Mg(2+) as a cofactor.

It carries out the reaction alpha,alpha-trehalose 6-phosphate + H2O = alpha,alpha-trehalose + phosphate. It functions in the pathway glycan biosynthesis; trehalose biosynthesis. Removes the phosphate from trehalose 6-phosphate to produce free trehalose. The protein is Trehalose-phosphate phosphatase (otsB) of Mycobacterium avium (strain 104).